The primary structure comprises 309 residues: tRNA dimethylallyltransferase (309 aa).

Residue 8–15 (GPTATGKS) coordinates ATP. Residue 10–15 (TATGKS) participates in substrate binding. The tract at residues 33–36 (DSRQ) is interaction with substrate tRNA.

This sequence belongs to the IPP transferase family. Monomer. The cofactor is Mg(2+).

It carries out the reaction adenosine(37) in tRNA + dimethylallyl diphosphate = N(6)-dimethylallyladenosine(37) in tRNA + diphosphate. In terms of biological role, catalyzes the transfer of a dimethylallyl group onto the adenine at position 37 in tRNAs that read codons beginning with uridine, leading to the formation of N6-(dimethylallyl)adenosine (i(6)A). In Trichodesmium erythraeum (strain IMS101), this protein is tRNA dimethylallyltransferase.